A 321-amino-acid chain; its full sequence is Ribosomal RNA small subunit methyltransferase H (321 aa).

Residues 40–42 (GGH), Asp-60, Phe-84, Asp-106, and Gln-113 each bind S-adenosyl-L-methionine.

This sequence belongs to the methyltransferase superfamily. RsmH family.

Its subcellular location is the cytoplasm. The enzyme catalyses cytidine(1402) in 16S rRNA + S-adenosyl-L-methionine = N(4)-methylcytidine(1402) in 16S rRNA + S-adenosyl-L-homocysteine + H(+). In terms of biological role, specifically methylates the N4 position of cytidine in position 1402 (C1402) of 16S rRNA. The protein is Ribosomal RNA small subunit methyltransferase H of Histophilus somni (strain 2336) (Haemophilus somnus).